Consider the following 366-residue polypeptide: Quinolinate synthase (366 aa).

Residues His44 and Ser61 each contribute to the iminosuccinate site. Cys108 contributes to the [4Fe-4S] cluster binding site. Iminosuccinate is bound by residues Tyr139–Asn141 and Ser160. Position 228 (Cys228) interacts with [4Fe-4S] cluster. Iminosuccinate is bound by residues His254–Glu256 and Thr271. Cys318 lines the [4Fe-4S] cluster pocket.

It belongs to the quinolinate synthase family. Type 3 subfamily. The cofactor is [4Fe-4S] cluster.

Its subcellular location is the cytoplasm. It catalyses the reaction iminosuccinate + dihydroxyacetone phosphate = quinolinate + phosphate + 2 H2O + H(+). The protein operates within cofactor biosynthesis; NAD(+) biosynthesis; quinolinate from iminoaspartate: step 1/1. In terms of biological role, catalyzes the condensation of iminoaspartate with dihydroxyacetone phosphate to form quinolinate. The sequence is that of Quinolinate synthase from Listeria innocua serovar 6a (strain ATCC BAA-680 / CLIP 11262).